A 757-amino-acid polypeptide reads, in one-letter code: RNA-directed RNA polymerase catalytic subunit (757 aa).

Residues 52 to 82 (RGKWTTNTETGAPQLNPIDGPLPEDNEPSGY) are disordered. Residues 55–64 (WTTNTETGAP) show a composition bias toward polar residues. 2 consecutive short sequence motifs (nuclear localization signal) follow at residues 187-195 (RKRRVRDNM) and 203-216 (RTIGKKKQRLNKRS). Residues 249–256 (RGFVYFVE) form a promoter-binding site region. Residues 286–483 (VRKMMTNSQD…GINMSKKKSY (198 aa)) form the RdRp catalytic domain.

It belongs to the influenza viruses polymerase PB1 family. Influenza RNA polymerase is composed of three subunits: PB1, PB2 and PA. Interacts (via N-terminus) with PA (via C-terminus). Interacts (via C-terminus) with PB2 (via N-terminus); this interaction is essential for transcription initiation. In terms of processing, phosphorylated by host PRKCA.

The protein localises to the host nucleus. Its subcellular location is the host cytoplasm. The enzyme catalyses RNA(n) + a ribonucleoside 5'-triphosphate = RNA(n+1) + diphosphate. Functionally, RNA-dependent RNA polymerase which is responsible for replication and transcription of virus RNA segments. The transcription of viral mRNAs occurs by a unique mechanism called cap-snatching. 5' methylated caps of cellular mRNAs are cleaved after 10-13 nucleotides by PA. In turn, these short capped RNAs are used as primers by PB1 for transcription of viral mRNAs. During virus replication, PB1 initiates RNA synthesis and copy vRNA into complementary RNA (cRNA) which in turn serves as a template for the production of more vRNAs. This is RNA-directed RNA polymerase catalytic subunit from Aves.